The chain runs to 525 residues: Bifunctional pantoate ligase/cytidylate kinase (525 aa).

Positions 1 to 292 are pantoate--beta-alanine ligase; it reads MDNVPIIRTV…VGSARLIDNM (292 aa). 44 to 51 contributes to the ATP binding site; that stretch reads MGALHAGH. The active-site Proton donor is histidine 51. A (R)-pantoate-binding site is contributed by glutamine 75. Glutamine 75 provides a ligand contact to beta-alanine. Residue 162-165 participates in ATP binding; that stretch reads GQKD. Glutamine 168 lines the (R)-pantoate pocket. ATP-binding positions include isoleucine 191 and 199–202; that span reads LSSR. Residues 293-525 are cytidylate kinase; it reads LLDARLPILA…LYQERFPDRA (233 aa).

This sequence in the N-terminal section; belongs to the pantothenate synthetase family. In the C-terminal section; belongs to the cytidylate kinase family. Type 1 subfamily.

The protein resides in the cytoplasm. The catalysed reaction is (R)-pantoate + beta-alanine + ATP = (R)-pantothenate + AMP + diphosphate + H(+). It catalyses the reaction CMP + ATP = CDP + ADP. The enzyme catalyses dCMP + ATP = dCDP + ADP. It participates in cofactor biosynthesis; (R)-pantothenate biosynthesis; (R)-pantothenate from (R)-pantoate and beta-alanine: step 1/1. Functionally, catalyzes the condensation of pantoate with beta-alanine in an ATP-dependent reaction via a pantoyl-adenylate intermediate. In terms of biological role, catalyzes the transfer of a phosphate group from ATP to either CMP or dCMP to form CDP or dCDP and ADP, respectively. The chain is Bifunctional pantoate ligase/cytidylate kinase from Acaryochloris marina (strain MBIC 11017).